A 178-amino-acid chain; its full sequence is NADPH azoreductase (178 aa).

106-111 (GGGKGG) contributes to the NADP(+) binding site.

This sequence belongs to the azoreductase type 2 family. Monomer.

It catalyses the reaction N,N-dimethyl-1,4-phenylenediamine + aniline + 2 NADP(+) = 4-(dimethylamino)azobenzene + 2 NADPH + 2 H(+). Functionally, catalyzes the reductive cleavage of azo bond in aromatic azo compounds to the corresponding amines. Requires NADPH as an electron donor for its activity. Compounds with paired naphthalene groups coupled with the azo group are good substrates, with the following preference order: Rocceline &gt; Sumifix Black B &gt; Solar Orange. In Bacillus sp. (strain OY1-2), this protein is NADPH azoreductase (azr).